The primary structure comprises 241 residues: Lipopolysaccharide export system ATP-binding protein LptB (241 aa).

The 233-residue stretch at 5–237 folds into the ABC transporter domain; that stretch reads LQAQSLFKSY…PMVRQVYLGD (233 aa). Residue 37–44 coordinates ATP; the sequence is GPNGAGKT.

Belongs to the ABC transporter superfamily. Outer membrane lipopolysaccharide export (TC 1.B.42) family. Component of the lipopolysaccharide transport and assembly complex. The LptBFG transporter is composed of two ATP-binding proteins (LptB) and two transmembrane proteins (LptF and LptG).

It is found in the cytoplasm. The protein localises to the cell inner membrane. Its function is as follows. Part of the ABC transporter complex LptBFG involved in the translocation of lipopolysaccharide (LPS) from the inner membrane to the outer membrane. Probably responsible for energy coupling to the transport system. In Acidithiobacillus ferridurans, this protein is Lipopolysaccharide export system ATP-binding protein LptB (lptB).